A 364-amino-acid chain; its full sequence is 4-hydroxythreonine-4-phosphate dehydrogenase (364 aa).

Substrate contacts are provided by His138 and Thr139. Residues His169, His214, and His269 each contribute to the a divalent metal cation site. Positions 277, 286, and 295 each coordinate substrate.

This sequence belongs to the PdxA family. In terms of assembly, homodimer. The cofactor is a divalent metal cation.

The protein resides in the cytoplasm. The catalysed reaction is 4-(phosphooxy)-L-threonine + NAD(+) = 3-amino-2-oxopropyl phosphate + CO2 + NADH. Its pathway is cofactor biosynthesis; pyridoxine 5'-phosphate biosynthesis; pyridoxine 5'-phosphate from D-erythrose 4-phosphate: step 4/5. Its function is as follows. Catalyzes the NAD(P)-dependent oxidation of 4-(phosphooxy)-L-threonine (HTP) into 2-amino-3-oxo-4-(phosphooxy)butyric acid which spontaneously decarboxylates to form 3-amino-2-oxopropyl phosphate (AHAP). This Bacteroides thetaiotaomicron (strain ATCC 29148 / DSM 2079 / JCM 5827 / CCUG 10774 / NCTC 10582 / VPI-5482 / E50) protein is 4-hydroxythreonine-4-phosphate dehydrogenase.